Reading from the N-terminus, the 258-residue chain is UPF0246 protein YaaA (258 aa).

The protein belongs to the UPF0246 family.

This chain is UPF0246 protein YaaA, found in Escherichia coli (strain SMS-3-5 / SECEC).